A 123-amino-acid chain; its full sequence is Small ribosomal subunit protein uS12 (123 aa).

The tract at residues Met-1–Pro-28 is disordered. Over residues Arg-9 to Ser-21 the composition is skewed to basic residues. Asp-89 is subject to 3-methylthioaspartic acid.

It belongs to the universal ribosomal protein uS12 family. Part of the 30S ribosomal subunit. Contacts proteins S8 and S17. May interact with IF1 in the 30S initiation complex.

In terms of biological role, with S4 and S5 plays an important role in translational accuracy. Interacts with and stabilizes bases of the 16S rRNA that are involved in tRNA selection in the A site and with the mRNA backbone. Located at the interface of the 30S and 50S subunits, it traverses the body of the 30S subunit contacting proteins on the other side and probably holding the rRNA structure together. The combined cluster of proteins S8, S12 and S17 appears to hold together the shoulder and platform of the 30S subunit. The polypeptide is Small ribosomal subunit protein uS12 (Ruegeria pomeroyi (strain ATCC 700808 / DSM 15171 / DSS-3) (Silicibacter pomeroyi)).